The sequence spans 379 residues: Glucose-1-phosphate adenylyltransferase (379 aa).

Alpha-D-glucose 1-phosphate is bound by residues glycine 164, glutamate 179–lysine 180, and serine 190.

The protein belongs to the bacterial/plant glucose-1-phosphate adenylyltransferase family. In terms of assembly, homotetramer.

It carries out the reaction alpha-D-glucose 1-phosphate + ATP + H(+) = ADP-alpha-D-glucose + diphosphate. The protein operates within glycan biosynthesis; glycogen biosynthesis. Functionally, involved in the biosynthesis of ADP-glucose, a building block required for the elongation reactions to produce glycogen. Catalyzes the reaction between ATP and alpha-D-glucose 1-phosphate (G1P) to produce pyrophosphate and ADP-Glc. The sequence is that of Glucose-1-phosphate adenylyltransferase from Streptococcus agalactiae serotype Ia (strain ATCC 27591 / A909 / CDC SS700).